The sequence spans 338 residues: Fructose-1,6-bisphosphatase class 1 1 (338 aa).

Mg(2+) is bound by residues Glu-91, Asp-113, Leu-115, and Asp-116. Substrate contacts are provided by residues 116 to 119 (DGSS), Asn-208, and Lys-274. Position 280 (Glu-280) interacts with Mg(2+).

It belongs to the FBPase class 1 family. Homotetramer. Mg(2+) serves as cofactor.

It is found in the cytoplasm. The enzyme catalyses beta-D-fructose 1,6-bisphosphate + H2O = beta-D-fructose 6-phosphate + phosphate. It functions in the pathway carbohydrate biosynthesis; gluconeogenesis. This chain is Fructose-1,6-bisphosphatase class 1 1, found in Cupriavidus necator (strain ATCC 17699 / DSM 428 / KCTC 22496 / NCIMB 10442 / H16 / Stanier 337) (Ralstonia eutropha).